Here is a 363-residue protein sequence, read N- to C-terminus: Transcription factor PIF6 (363 aa).

2 disordered regions span residues 154 to 204 and 340 to 363; these read SEGS…RNDI and IPNPNSLSNLDGATLHKKSRKTNR. Positions 178–188 are enriched in basic residues; that stretch reads RTRKALVKRKR. One can recognise a bHLH domain in the interval 188-237; the sequence is RNAEAYNSPERNQRNDINKKMRTLQNLLPNSHKDDNESMLDEAINYMTNL. Polar residues predominate over residues 340 to 350; it reads IPNPNSLSNLD. Over residues 354–363 the composition is skewed to basic residues; the sequence is LHKKSRKTNR.

As to quaternary structure, homodimer. Interacts with APRR1/TOC1. Binds to RGL2 and RGA. Associates to PTAC12/HMR/PAP5 which acts as a transcriptional coactivator. In terms of tissue distribution, mainly expressed in fruits and flowers and, to a lower extent, in leaves, stems, seedlings and roots.

It localises to the nucleus. Functionally, transcription factor. The polypeptide is Transcription factor PIF6 (Arabidopsis thaliana (Mouse-ear cress)).